Here is a 343-residue protein sequence, read N- to C-terminus: MSNTDKERAIAAALAQIEKSYGKGSVMKLGQRPHVDIEAVSTGSLGLDIALGIGGIPKGRIIEIFGPESSGKTTLTLHLIAEAQKKGGTCAFIDAEHALDPAYAKKLGVNIDELIISQPDTGEQALEIADTLIRSGGIDMIIIDSVAALVPKSEIEGEMGDAQMASQARLMSQALRKLTASINRTNCITVFINQIRMKIGVMFGSPETTTGGNALKFYASVRIDIRRIGSIKDKEEVIGSQTKVKVVKNKVSPPFKTADFDIMYGSGISKEGEIIDLGVKLDIVEKSGSWFSYKNVRIGQGRENVKQYLKEHPQISNEIEKIIREKSSKITNINLDQTGEEND.

66–73 (GPESSGKT) contacts ATP.

This sequence belongs to the RecA family.

The protein resides in the cytoplasm. In terms of biological role, can catalyze the hydrolysis of ATP in the presence of single-stranded DNA, the ATP-dependent uptake of single-stranded DNA by duplex DNA, and the ATP-dependent hybridization of homologous single-stranded DNAs. It interacts with LexA causing its activation and leading to its autocatalytic cleavage. The protein is Protein RecA of Rickettsia massiliae (strain Mtu5).